Consider the following 195-residue polypeptide: Probable GTP-binding protein EngB (195 aa).

The region spanning 24-195 (GLSEVALSGR…QIWDLIANYL (172 aa)) is the EngB-type G domain. Residues 32 to 39 (GRSNVGKS), 59 to 63 (GKTQT), 77 to 80 (DVPG), 144 to 147 (TKED), and 176 to 178 (YSS) contribute to the GTP site. Mg(2+) contacts are provided by Ser-39 and Thr-61.

This sequence belongs to the TRAFAC class TrmE-Era-EngA-EngB-Septin-like GTPase superfamily. EngB GTPase family. Requires Mg(2+) as cofactor.

Functionally, necessary for normal cell division and for the maintenance of normal septation. The sequence is that of Probable GTP-binding protein EngB from Staphylococcus haemolyticus (strain JCSC1435).